Here is a 632-residue protein sequence, read N- to C-terminus: Mediator of RNA polymerase II transcription subunit 17 (632 aa).

2 disordered regions span residues 1–21 and 50–72; these read MSDS…RPDS and EDKH…DLET. A compositionally biased stretch (basic and acidic residues) spans 11–21; it reads PIREKRDRPDS. Positions 58–72 are enriched in acidic residues; sequence EEDDEGDKESTDLET.

This sequence belongs to the Mediator complex subunit 17 family. As to quaternary structure, component of the Mediator complex.

It is found in the nucleus. Functionally, component of the Mediator complex, a coactivator involved in the regulated transcription of nearly all RNA polymerase II-dependent genes. Mediator functions as a bridge to convey information from gene-specific regulatory proteins to the basal RNA polymerase II transcription machinery. Mediator is recruited to promoters by direct interactions with regulatory proteins and serves as a scaffold for the assembly of a functional preinitiation complex with RNA polymerase II and the general transcription factors. This Emericella nidulans (strain FGSC A4 / ATCC 38163 / CBS 112.46 / NRRL 194 / M139) (Aspergillus nidulans) protein is Mediator of RNA polymerase II transcription subunit 17 (srb4).